The chain runs to 99 residues: Integration host factor subunit alpha (99 aa).

It belongs to the bacterial histone-like protein family. As to quaternary structure, heterodimer of an alpha and a beta chain.

In terms of biological role, this protein is one of the two subunits of integration host factor, a specific DNA-binding protein that functions in genetic recombination as well as in transcriptional and translational control. In Mannheimia haemolytica (Pasteurella haemolytica), this protein is Integration host factor subunit alpha (ihfA).